A 357-amino-acid chain; its full sequence is Solute carrier family 25 member 3 (357 aa).

Residues 1 to 45 (MFSSVAHLARANPFNAPHLQLVHDGLSGPRSPPAPPRRSRHLAAA) constitute a mitochondrion transit peptide. Residues 46 to 58 (AVEEYSCEFGSMK) are Mitochondrial intermembrane-facing. Solcar repeat units follow at residues 58 to 142 (KYYA…FKAL), 155 to 239 (WRTS…TVEA), and 256 to 334 (EQLV…VKVY). Residues 59–81 (YYALCGFGGVLSCGLTHTAVVPL) form a helical membrane-spanning segment. Residues 82 to 116 (DLVKCRMQVDPQKYKGIFNGFSITLKEDGVRGLAK) are Mitochondrial matrix-facing. N6-acetyllysine is present on lysine 94. Lysine 107 bears the N6-methyllysine mark. The helical transmembrane segment at 117–136 (GWAPTLIGYSMQGLCKFGFY) threads the bilayer. Topologically, residues 137-156 (EVFKALYSNILGEENTYLWR) are mitochondrial intermembrane. Residues 157–178 (TSLYLASSASAEFFADIALAPM) traverse the membrane as a helical segment. The Mitochondrial matrix portion of the chain corresponds to 179–213 (EAAKVRIQTQPGYANTLREAVPKMYKEEGLNAFYK). The residue at position 191 (tyrosine 191) is a Phosphotyrosine. Lysine 204 is subject to N6-acetyllysine. The chain crosses the membrane as a helical span at residues 214–233 (GVAPLWMRQIPYTMMKFACF). Over 234–256 (ERTVEALYKFVVPKPRSECTKAE) the chain is Mitochondrial intermembrane. The chain crosses the membrane as a helical span at residues 257 to 279 (QLVVTFVAGYIAGVFCAIVSHPA). At 280-309 (DSVVSVLNKEKGSTASQVLQRLGFRGVWKG) the chain is on the mitochondrial matrix side. Residues 310 to 328 (LFARIIMIGTLTALQWFIY) traverse the membrane as a helical segment. Over 329–357 (DSVKVYFRLPRPPPPEMPESLKKKLGLTE) the chain is Mitochondrial intermembrane.

Belongs to the mitochondrial carrier (TC 2.A.29) family. As to quaternary structure, interacts with PPIF; the interaction is impaired by CsA.

The protein localises to the mitochondrion inner membrane. It carries out the reaction phosphate(in) + H(+)(in) = phosphate(out) + H(+)(out). Inorganic ion transporter that transports phosphate or copper ions across the mitochondrial inner membrane into the matrix compartment. Mediates proton-coupled symport of phosphate ions necessary for mitochondrial oxidative phosphorylation of ADP to ATP. Transports copper ions probably in the form of anionic copper(I) complexes to maintain mitochondrial matrix copper pool and to supply copper for cytochrome C oxidase complex assembly. May also play a role in regulation of the mitochondrial permeability transition pore (mPTP). This Mus musculus (Mouse) protein is Solute carrier family 25 member 3.